The following is a 629-amino-acid chain: Smc-like protein Sph1 (629 aa).

2 coiled-coil regions span residues 139–282 (LETE…LLDD) and 318–487 (AETT…NQFD).

Belongs to the Sph1/Sph2 family.

The protein resides in the cytoplasm. Functionally, may play a role in a late step of replication. This is Smc-like protein Sph1 (sph1) from Halobacterium salinarum (Halobacterium halobium).